The primary structure comprises 400 residues: tRNA-specific 2-thiouridylase MnmA (400 aa).

Residues 19–26 and Leu-45 contribute to the ATP site; that span reads AMSGGVDS. Cys-113 (nucleophile) is an active-site residue. Cysteines 113 and 210 form a disulfide. ATP is bound at residue Gly-137. Residues 160–162 form an interaction with tRNA region; the sequence is RDQ. Catalysis depends on Cys-210, which acts as the Cysteine persulfide intermediate.

Belongs to the MnmA/TRMU family.

The protein localises to the cytoplasm. The enzyme catalyses S-sulfanyl-L-cysteinyl-[protein] + uridine(34) in tRNA + AH2 + ATP = 2-thiouridine(34) in tRNA + L-cysteinyl-[protein] + A + AMP + diphosphate + H(+). In terms of biological role, catalyzes the 2-thiolation of uridine at the wobble position (U34) of tRNA, leading to the formation of s(2)U34. In Nitrobacter winogradskyi (strain ATCC 25391 / DSM 10237 / CIP 104748 / NCIMB 11846 / Nb-255), this protein is tRNA-specific 2-thiouridylase MnmA.